Reading from the N-terminus, the 238-residue chain is ATP synthase subunit a (238 aa).

5 consecutive transmembrane segments (helical) span residues 17–37 (LSNI…AIIC), 75–95 (FHVL…LGLP), 112–132 (DPIV…YYGI), 172–192 (YGNI…LAHI), and 194–214 (IFVG…SLFI).

It belongs to the ATPase A chain family. F-type ATPases have 2 components, CF(1) - the catalytic core - and CF(0) - the membrane proton channel. CF(1) has five subunits: alpha(3), beta(3), gamma(1), delta(1), epsilon(1). CF(0) has three main subunits: a(1), b(2) and c(9-12). The alpha and beta chains form an alternating ring which encloses part of the gamma chain. CF(1) is attached to CF(0) by a central stalk formed by the gamma and epsilon chains, while a peripheral stalk is formed by the delta and b chains.

The protein resides in the cell membrane. In terms of biological role, key component of the proton channel; it plays a direct role in the translocation of protons across the membrane. The polypeptide is ATP synthase subunit a (Listeria monocytogenes serovar 1/2a (strain ATCC BAA-679 / EGD-e)).